Reading from the N-terminus, the 172-residue chain is RNA silencing suppressor p19 (172 aa).

Basic and acidic residues-rich tracts occupy residues 1-14 (MERA…REQA) and 150-172 (SERE…EESE). Disordered stretches follow at residues 1-34 (MERA…KLPD) and 145-172 (LQPT…EESE).

Belongs to the tombusvirus protein p19 family. Homodimer.

Viral suppressor of RNA silencing which binds specifically to silencing RNAs (siRNAs). Acts as a molecular caliper to specifically select siRNAs based on the length of the duplex region of the RNA. This chain is RNA silencing suppressor p19, found in Cymbidium ringspot virus (CymRSV).